A 122-amino-acid chain; its full sequence is UPF0102 protein CPF_1959 (122 aa).

The protein belongs to the UPF0102 family.

This Clostridium perfringens (strain ATCC 13124 / DSM 756 / JCM 1290 / NCIMB 6125 / NCTC 8237 / Type A) protein is UPF0102 protein CPF_1959.